We begin with the raw amino-acid sequence, 396 residues long: Diels-Alderase mpsD (396 aa).

This sequence belongs to the Diels-Alderase family.

It participates in secondary metabolite biosynthesis. Diels-Alderase; part of the gene cluster that mediates the biosynthesis of macrophasetins, 3-decalinoyltetramic acids (DTAs) which feature a tetramate (pyrrolidine-2,4-dione) unit connected to a decalin fragment and that have potent bioactivities. The PKS-NRPS mpsA together with its associated enoylreductase partner mpsG incorporate one unit of acetyl-CoA, seven units of malonyl-CoA, and one unit of L-alanine to assemble the linear tetramic acid intermediate corresponding to the backbone of macrophasetins. Without the Diels-Alderase mpsD, the mpsA/G product can undergo the non-enzymatic intramolecular Diels-Alder (IMDA) reaction to generate both macrophasetin A and macrophasetin B. Catalyzed by mpsD, the linear tetramic acid intermediate is thoroughly converted to macrophasetin A via the endo-IMDA reaction in a regioselective and stereoselective manner. Finally, the cytochrome P450 monooxygenase mpsF catalyzes the hydroxylation at C20 to yield the end product macrophasetin C. This is Diels-Alderase mpsD from Macrophomina phaseolina (strain MS6) (Charcoal rot fungus).